The sequence spans 58 residues: Succinate dehydrogenase subunit 8A, mitochondrial (58 aa).

As to quaternary structure, component of complex II composed of eight subunits in plants: four classical SDH subunits SDH1, SDH2, SDH3 and SDH4 (a flavoprotein (FP), an iron-sulfur protein (IP), and a cytochrome b composed of a large and a small subunit.), as well as four subunits unknown in mitochondria from bacteria and heterotrophic eukaryotes.

The protein localises to the mitochondrion inner membrane. It participates in carbohydrate metabolism; tricarboxylic acid cycle. The chain is Succinate dehydrogenase subunit 8A, mitochondrial from Oryza sativa subsp. japonica (Rice).